Reading from the N-terminus, the 184-residue chain is Peptide methionine sulfoxide reductase (184 aa).

At Ser-58 the chain carries Phosphoserine.

This sequence belongs to the MsrA Met sulfoxide reductase family.

It catalyses the reaction L-methionyl-[protein] + [thioredoxin]-disulfide + H2O = L-methionyl-(S)-S-oxide-[protein] + [thioredoxin]-dithiol. It carries out the reaction [thioredoxin]-disulfide + L-methionine + H2O = L-methionine (S)-S-oxide + [thioredoxin]-dithiol. In terms of biological role, has an important function as a repair enzyme for proteins that have been inactivated by oxidation. Catalyzes the reversible oxidation-reduction of methionine sulfoxide in proteins to methionine. Also able to reduce dimethyl sulfoxide (DMSO) as well, with DMS as the product. The chain is Peptide methionine sulfoxide reductase (MXR1) from Saccharomyces cerevisiae (strain ATCC 204508 / S288c) (Baker's yeast).